We begin with the raw amino-acid sequence, 162 residues long: 2-C-methyl-D-erythritol 2,4-cyclodiphosphate synthase (162 aa).

A divalent metal cation contacts are provided by Asp12 and His14. 4-CDP-2-C-methyl-D-erythritol 2-phosphate is bound by residues Asp12–His14 and His38–Ser39. Position 46 (His46) interacts with a divalent metal cation. Residues Asp60–Gly62, Phe65–Asp69, and Arg146 each bind 4-CDP-2-C-methyl-D-erythritol 2-phosphate.

It belongs to the IspF family. As to quaternary structure, homotrimer. Requires a divalent metal cation as cofactor.

It carries out the reaction 4-CDP-2-C-methyl-D-erythritol 2-phosphate = 2-C-methyl-D-erythritol 2,4-cyclic diphosphate + CMP. The protein operates within isoprenoid biosynthesis; isopentenyl diphosphate biosynthesis via DXP pathway; isopentenyl diphosphate from 1-deoxy-D-xylulose 5-phosphate: step 4/6. Functionally, involved in the biosynthesis of isopentenyl diphosphate (IPP) and dimethylallyl diphosphate (DMAPP), two major building blocks of isoprenoid compounds. Catalyzes the conversion of 4-diphosphocytidyl-2-C-methyl-D-erythritol 2-phosphate (CDP-ME2P) to 2-C-methyl-D-erythritol 2,4-cyclodiphosphate (ME-CPP) with a corresponding release of cytidine 5-monophosphate (CMP). The polypeptide is 2-C-methyl-D-erythritol 2,4-cyclodiphosphate synthase (Bordetella parapertussis (strain 12822 / ATCC BAA-587 / NCTC 13253)).